The primary structure comprises 577 residues: BAG family molecular chaperone regulator 3 (577 aa).

Residues 1-17 (MSAATQSPMMQMASGNG) are compositionally biased toward polar residues. Disordered stretches follow at residues 1 to 81 (MSAA…LLPI), 126 to 207 (TEAA…SHQL), and 229 to 427 (PSFH…HPGV). An N-acetylserine modification is found at Ser2. 2 WW domains span residues 22–56 (DPLP…DPRV) and 126–157 (TEAA…CGQM). Phosphoserine is present on Ser138. Arg141 bears the Omega-N-methylarginine mark. The segment covering 158 to 204 (PATATTAAAQPPTAHGPERSQSPAASDCSSSSSSASLPSSGRSSLGS) has biased composition (low complexity). A phosphoserine mark is found at Ser179 and Ser204. Over residues 256–265 (IQGDDWEPRP) the composition is skewed to basic and acidic residues. Arg267 carries the post-translational modification Omega-N-methylarginine. Phosphoserine is present on residues Ser280, Ser281, and Ser285. Thr291 carries the post-translational modification Phosphothreonine. Position 297 is a phosphoserine (Ser297). Composition is skewed to pro residues over residues 332–341 (PAGPDLPPGH) and 376–392 (IPCP…PSPP). Phosphoserine occurs at positions 380, 382, and 390. Residues 426–503 (GVLKVEAILE…TILEKLEQKA (78 aa)) form the BAG domain. A Glycyl lysine isopeptide (Lys-Gly) (interchain with G-Cter in SUMO1); alternate cross-link involves residue Lys450. Lys450 participates in a covalent cross-link: Glycyl lysine isopeptide (Lys-Gly) (interchain with G-Cter in SUMO2); alternate. Positions 524–577 (QPLQEIMGAVVADKDKKGPENKDPQTESQQLEAKAATPPNPSNPADSAGNLVAP) are disordered. Positions 535 to 548 (ADKDKKGPENKDPQ) are enriched in basic and acidic residues.

In terms of assembly, forms a ternary complex with HSPA1A/HSP70 and HSPB8, serving as scaffold subunit. Component of the chaperone-assisted selective autophagy (CASA) complex consisting of BAG3, HSPA8/HSC70, HSPB8 and STUB1/CHIP. Binds to the ATPase domain of HSP70 chaperones. Interacts with BCL2. Interacts with phospholipase C-gamma proteins. Interacts with DNAJB1 and DNAJB6. Interacts (via BAG domain) with HSF1; this interaction occurs in normal and heat-shocked cells. Interacts with HSPA8/HSC70 (via NBD), HSPA1A (via NBD) and HSPA1B (via NBD). Interacts (via WW domain 1) with SYNPO2 (via PPPY motif). Interacts with HSPB8.

Its subcellular location is the nucleus. The protein resides in the cytoplasm. In terms of biological role, co-chaperone and adapter protein that connects different classes of molecular chaperones including heat shock proteins 70 (HSP70s), e.g. HSPA1A/HSP70 or HSPA8/HSC70, and small heat shock proteins (sHSPs), e.g. HSPB8. Acts as a nucleotide-exchange factor (NEF) promoting the release of ADP from HSP70s, thereby triggering client protein release. Nucleotide release is mediated via BAG3 binding to the nucleotide-binding domain (NBD) of HSP70s, whereas client release is mediated via its binding to the substrate-binding domain (SBD). Has anti-apoptotic activity. Plays a role in the HSF1 nucleocytoplasmic transport. The chain is BAG family molecular chaperone regulator 3 (Bag3) from Mus musculus (Mouse).